The chain runs to 396 residues: ATP-dependent RNA helicase eIF4A (396 aa).

The Q motif motif lies at 22–50; sequence YSFDDLKLKEELLRGIFGYGFVEPSAIQQ. A Helicase ATP-binding domain is found at 53–223; it reads ILPIIEGKDV…SKFMKDPVRI (171 aa). Residue 66-73 coordinates ATP; sequence AQSGTGKT. The DEAD box signature appears at 171–174; that stretch reads DEAD. The Helicase C-terminal domain occupies 234–395; that stretch reads GIGQYYVNVE…ELPSSISELF (162 aa).

The protein belongs to the DEAD box helicase family. eIF4A subfamily. Component of the eIF4F complex, which composition varies with external and internal environmental conditions. It is composed of at least eIF4A, eIF4E and eIF4G.

It localises to the cytoplasm. The enzyme catalyses ATP + H2O = ADP + phosphate + H(+). In terms of biological role, ATP-dependent RNA helicase which is a subunit of the eIF4F complex involved in cap recognition and is required for mRNA binding to ribosome. In the current model of translation initiation, eIF4A unwinds RNA secondary structures in the 5'-UTR of mRNAs which is necessary to allow efficient binding of the small ribosomal subunit, and subsequent scanning for the initiator codon. In Kluyveromyces lactis (strain ATCC 8585 / CBS 2359 / DSM 70799 / NBRC 1267 / NRRL Y-1140 / WM37) (Yeast), this protein is ATP-dependent RNA helicase eIF4A (TIF1).